We begin with the raw amino-acid sequence, 366 residues long: Ribosomal RNA large subunit methyltransferase M (366 aa).

S-adenosyl-L-methionine is bound by residues S188, C221–G224, D240, D260, and D277. K306 (proton acceptor) is an active-site residue.

This sequence belongs to the class I-like SAM-binding methyltransferase superfamily. RNA methyltransferase RlmE family. RlmM subfamily. Monomer.

It is found in the cytoplasm. The catalysed reaction is cytidine(2498) in 23S rRNA + S-adenosyl-L-methionine = 2'-O-methylcytidine(2498) in 23S rRNA + S-adenosyl-L-homocysteine + H(+). Its function is as follows. Catalyzes the 2'-O-methylation at nucleotide C2498 in 23S rRNA. This is Ribosomal RNA large subunit methyltransferase M from Dickeya chrysanthemi (strain Ech1591) (Dickeya zeae (strain Ech1591)).